The sequence spans 272 residues: Cyclase-like protein 2 (272 aa).

Positions Met-1–Gln-17 are cleaved as a signal peptide.

This sequence belongs to the Cyclase 1 superfamily. In terms of tissue distribution, highly expressed in leaf sheaths and flag leaves. Expressed in roots, stems, leaf collars, glumes, young panicles and pistils.

The protein localises to the secreted. Its subcellular location is the extracellular space. It localises to the extracellular matrix. May be involved in response to stresses. This Oryza sativa subsp. japonica (Rice) protein is Cyclase-like protein 2.